A 214-amino-acid polypeptide reads, in one-letter code: Vascular endothelial growth factor A (214 aa).

Positions 1–26 are cleaved as a signal peptide; that stretch reads MNFLLSWVHWTLALLLYLHHAKWSQA. 3 cysteine pairs are disulfide-bonded: C51-C93, C82-C127, and C86-C129. The N-linked (GlcNAc...) asparagine glycan is linked to N100. Basic and acidic residues predominate over residues 131 to 142; that stretch reads PKKDRTKPEKKS. The interval 131–159 is disordered; it reads PKKDRTKPEKKSVRGKGKGQKRKRKKSRF. The span at 143–159 shows a compositional bias: basic residues; the sequence is VRGKGKGQKRKRKKSRF.

Belongs to the PDGF/VEGF growth factor family. In terms of assembly, homodimer; disulfide-linked. Also found as heterodimer with PGF. Interacts with NRP1. Interacts with isoform 2 of BSG. Interacts with CD82; this interaction inhibits VEGFA-mediated signaling pathway. As to expression, expressed in the pituitary, in brain, in particularly in supraoptic and paraventricular nuclei and the choroid plexus. Also found abundantly in the corpus luteum of the ovary and in kidney glomeruli. Expressed in the ductal epithelial cells of post-pubertal mammary glands. Expressed in the ductal and alveolar epithelial cells throughout the whole period of gestational evolution, lactation and involution.

It is found in the secreted. In terms of biological role, growth factor active in angiogenesis, vasculogenesis and endothelial cell growth. Induces endothelial cell proliferation, promotes cell migration, inhibits apoptosis and induces permeabilization of blood vessels. Binds to the FLT1/VEGFR1 and KDR/VEGFR2 receptors, heparan sulfate and heparin. May play a role in increasing vascular permeability during lactation, when increased transport of molecules from the blood is required for efficient milk protein synthesis. Binding to NRP1 receptor initiates a signaling pathway needed for motor neuron axon guidance and cell body migration, including for the caudal migration of facial motor neurons from rhombomere 4 to rhombomere 6 during embryonic development. Also binds the DEAR/FBXW7-AS1 receptor. This chain is Vascular endothelial growth factor A (Vegfa), found in Rattus norvegicus (Rat).